The chain runs to 117 residues: Appetite-regulating hormone (117 aa).

The N-terminal stretch at 1 to 23 (MPSPGTVCSLLLFSMLWADLAMA) is a signal peptide. The O-decanoyl serine; alternate moiety is linked to residue Ser26. A lipid anchor (O-hexanoyl serine; alternate) is attached at Ser26. Residue Ser26 is the site of O-octanoyl serine; alternate attachment. The segment at 29 to 52 (SPEHQKVQQRKESKKPPAKLQPRA) is disordered. Basic and acidic residues predominate over residues 31–43 (EHQKVQQRKESKK). Residues 52-75 (ALEGLIHPEDTSQVEGAEDELEIR) constitute a propeptide, removed in mature form. Leucine amide is present on Leu98. Residues 99 to 117 (GKFLQDVLWEEADEVLADE) constitute a propeptide, removed in mature form.

It belongs to the motilin family. Post-translationally, O-octanoylated by GOAT/MBOAT4. O-octanoylation or O-decanoylation is essential for ghrelin activity. The O-decanoylated forms Ghrelin-27-C10 and Ghrelin-28-C10 differ in the length of the carbon backbone of the carboxylic acid bound to Ser-26. A small fraction of ghrelin, ghrelin-27-C10:1, ghrelin-27-C10:2, ghrelin-28-C8:1, ghrelin-28-C10:1, and ghrelin-28-C10:2, may be modified with singly or doubly unsaturated carboxylic acids. Amidation of Leu-98 is essential for obestatin activity.

It is found in the secreted. Its function is as follows. Ghrelin is the ligand for growth hormone secretagogue receptor type 1 (GHSR). Induces the release of growth hormone from the pituitary. Has an appetite-stimulating effect, induces adiposity and stimulates gastric acid secretion. Involved in growth regulation. Obestatin may be the ligand for GPR39. May have an appetite-reducing effect resulting in decreased food intake. May reduce gastric emptying activity and jejunal motility. The polypeptide is Appetite-regulating hormone (GHRL) (Felis catus (Cat)).